A 284-amino-acid polypeptide reads, in one-letter code: Protein phosphatase 1 regulatory subunit 3B (284 aa).

Positions Arg-61–Phe-64 match the PP1-binding motif motif. Residues Arg-124 to Thr-232 enclose the CBM21 domain. Position 260 is a phosphoserine (Ser-260).

As to quaternary structure, interacts with glycogen, PPP1CC catalytic subunit of PP1 and PYGL. Associates with glycogen particles. Forms complexes with debranching enzyme, glycogen phosphorylase, glycogen synthase and phosphorylase kinase which is necessary for its regulation of PP1 activity. In terms of tissue distribution, highly expressed in liver. Moderately expressed in kidney, heart, testis, spleen and lung. Weakly expressed in skeletal muscle (at protein level). Expressed predominantly in liver. Expressed moderately in heart. Expressed weakly in lung, kidney, spleen and skeletal muscle.

Its function is as follows. Acts as a glycogen-targeting subunit for phosphatase PP1. Facilitates interaction of the PP1 with enzymes of the glycogen metabolism and regulates its activity. Suppresses the rate at which PP1 dephosphorylates (inactivates) glycogen phosphorylase and enhances the rate at which it activates glycogen synthase and therefore limits glycogen breakdown. Its activity is inhibited by PYGL, resulting in inhibition of the glycogen synthase and glycogen phosphorylase phosphatase activities of PP1. Dramatically increases basal and insulin-stimulated glycogen synthesis upon overexpression in hepatocytes. The protein is Protein phosphatase 1 regulatory subunit 3B (Ppp1r3b) of Rattus norvegicus (Rat).